The following is a 728-amino-acid chain: Probable LRR receptor-like serine/threonine-protein kinase At1g14390 (728 aa).

An N-terminal signal peptide occupies residues Met1 to Ser27. The Extracellular portion of the chain corresponds to Gln28–Leu356. 2 N-linked (GlcNAc...) asparagine glycosylation sites follow: Asn55 and Asn85. LRR repeat units lie at residues Asn74–Ser96, Leu106–Leu130, Ser131–Leu155, Asn157–Leu178, Ser179–Asn202, Ile204–Leu224, Asn225–Leu248, Pro249–Asn272, and Lys274–Ser295. 2 N-linked (GlcNAc...) asparagine glycosylation sites follow: Asn138 and Asn169. An N-linked (GlcNAc...) asparagine glycan is attached at Asn210. N-linked (GlcNAc...) asparagine glycosylation is found at Asn253 and Asn267. A helical transmembrane segment spans residues Val357–Val377. At Arg378–Leu728 the chain is on the cytoplasmic side. The 289-residue stretch at Thr421 to Ile709 folds into the Protein kinase domain.

The protein belongs to the protein kinase superfamily. Ser/Thr protein kinase family.

It localises to the membrane. It carries out the reaction L-seryl-[protein] + ATP = O-phospho-L-seryl-[protein] + ADP + H(+). The enzyme catalyses L-threonyl-[protein] + ATP = O-phospho-L-threonyl-[protein] + ADP + H(+). The sequence is that of Probable LRR receptor-like serine/threonine-protein kinase At1g14390 from Arabidopsis thaliana (Mouse-ear cress).